Consider the following 161-residue polypeptide: ATP synthase subunit b 1 (161 aa).

A helical transmembrane segment spans residues 6 to 26; sequence EFYVALGFVIFVAILLYYGVH.

This sequence belongs to the ATPase B chain family. In terms of assembly, F-type ATPases have 2 components, F(1) - the catalytic core - and F(0) - the membrane proton channel. F(1) has five subunits: alpha(3), beta(3), gamma(1), delta(1), epsilon(1). F(0) has three main subunits: a(1), b(2) and c(10-14). The alpha and beta chains form an alternating ring which encloses part of the gamma chain. F(1) is attached to F(0) by a central stalk formed by the gamma and epsilon chains, while a peripheral stalk is formed by the delta and b chains.

It localises to the cell inner membrane. Its function is as follows. F(1)F(0) ATP synthase produces ATP from ADP in the presence of a proton or sodium gradient. F-type ATPases consist of two structural domains, F(1) containing the extramembraneous catalytic core and F(0) containing the membrane proton channel, linked together by a central stalk and a peripheral stalk. During catalysis, ATP synthesis in the catalytic domain of F(1) is coupled via a rotary mechanism of the central stalk subunits to proton translocation. In terms of biological role, component of the F(0) channel, it forms part of the peripheral stalk, linking F(1) to F(0). This chain is ATP synthase subunit b 1, found in Beijerinckia indica subsp. indica (strain ATCC 9039 / DSM 1715 / NCIMB 8712).